Here is a 426-residue protein sequence, read N- to C-terminus: 10-deoxymethynolide desosaminyltransferase (426 aa).

The protein belongs to the glycosyltransferase 28 family. As to quaternary structure, forms a complex with DesVIII.

It catalyses the reaction 10-deoxymethynolide + dTDP-alpha-D-desosamine = 10-deoxymethymycin + dTDP + H(+). It functions in the pathway antibiotic biosynthesis. Functionally, involved in the biosynthesis of the macrolide antibiotics methymycin, neomethymycin, narbomycin, and pikromycin. Catalyzes the attachment of dTDP-D-desosamine onto 12- and 14-membered macrolactone rings 10-deoxymethynolide and narbonolide to produce 10-deoxymethymycin (YC-17) and narbomycin. DesVII is unique among glycosyltransferases in that it requires an additional protein component, DesVIII, for its activity. DesVII can recognize and process not only cyclic substrates of different ring size, but also a variety of linear substrates albeit with reduced, but measurable activities. Both L-sugars and D-sugars are recognized as substrates and variant substitutions at C-3 and C-4 are tolerated, but deoxygenation at C-6 is required. This Streptomyces venezuelae protein is 10-deoxymethynolide desosaminyltransferase.